The following is a 2176-amino-acid chain: Protein sidekick-2 (2176 aa).

The N-terminal stretch at 1–24 (MFSSMWRLPLWTLLALHRIHSAGA) is a signal peptide. Over 25 to 1936 (QDDVPPYFKT…ASPFYEEWWF (1912 aa)) the chain is Extracellular. 6 Ig-like C2-type domains span residues 30–112 (PYFK…TEVQ), 117–204 (GSFE…QPIT), 219–298 (PTII…SSVA), 312–402 (PQFV…LAVT), 406–495 (PNIT…ADLV), and 500–589 (TRIT…AHLR). Cysteines 52 and 95 form a disulfide. N-linked (GlcNAc...) asparagine glycosylation is present at N197. Intrachain disulfides connect C241–C288, C334–C384, C427–C479, and C521–C573. Fibronectin type-III domains follow at residues 596-692 (APEH…LPEE), 697-793 (PPQN…TLQG), 798-897 (PPGN…THED), 901-995 (PVGH…VPPE), 999-1098 (APTN…TLQA), 1103-1201 (APAN…TRES), 1206-1303 (GPTN…TLDD), 1307-1401 (PPMG…TEKR), 1406-1503 (PPSK…TLQA), 1508-1625 (APTI…VGEA), 1630-1726 (APQN…TQQA), 1730-1825 (APGS…TGPG), and 1828-1930 (APGP…ASPF). An N-linked (GlcNAc...) asparagine glycan is attached at N747. Residues N940 and N952 are each glycosylated (N-linked (GlcNAc...) asparagine). N-linked (GlcNAc...) asparagine glycosylation is present at N1106. N-linked (GlcNAc...) asparagine glycosylation is present at N1592. Positions 1712 to 1734 (DGPRSTPTRGQTQQAAPSAPGSV) are disordered. Residues 1716–1727 (STPTRGQTQQAA) are compositionally biased toward polar residues. A helical membrane pass occupies residues 1937-1957 (LVVIALVGLIFILLLVFVLII). Residues 1958-2176 (RGQSKKYSKK…APIAGFSSFV (219 aa)) lie on the Cytoplasmic side of the membrane. Disordered stretches follow at residues 2013–2032 (GLYTRSPPRPSPGSLHYSDE), 2043–2070 (AESSSLTEKPSEISDSQGSDSEYEVDTN), and 2102–2176 (QAYS…SSFV). 2 stretches are compositionally biased toward polar residues: residues 2044-2070 (ESSSLTEKPSEISDSQGSDSEYEVDTN) and 2119-2129 (VPNSNSTQQGS). A PDZ-binding motif is present at residues 2170-2176 (AGFSSFV).

It belongs to the sidekick family. Homodimer; mediates homophilic interactions to promote cell adhesion. Interacts (via PDZ-binding motif) with MAGI1, MAGI2, DLG2, DLG3 and DLG4. In terms of tissue distribution, expressed in retinal ganglion cells (RGCs) that form synapses in distinct inner plexiform layer (IPL) sublaminae. Specifically expressed in specific subsets of retinal ganglion cells (RGCs), named W3B-RGCs, that specifically respond when the timing of the movement of a small object differs from that of the background, but not when they coincide (at protein level). Also present in excitatory amacrine cell type called VG3-ACs, that provide strong and selective input W3B-RGCs (at protein level). Expressed at low levels in the glomeruli.

Its subcellular location is the cell membrane. The protein resides in the synapse. Its function is as follows. Adhesion molecule that promotes lamina-specific synaptic connections in the retina and is specifically required for the formation of neuronal circuits that detect motion. Acts by promoting formation of synapses between two specific retinal cell types: the retinal ganglion cells W3B-RGCs and the excitatory amacrine cells VG3-ACs. Formation of synapses between these two cells plays a key role in detection of motion. Promotes synaptic connectivity via homophilic interactions. This is Protein sidekick-2 from Mus musculus (Mouse).